A 109-amino-acid polypeptide reads, in one-letter code: Large ribosomal subunit protein P1 (109 aa).

The tract at residues 71–109 is disordered; sequence APAAASSAPAKKEEPKKEEPKKEEPKEEETDMDMGDLFG. Residues 80 to 95 are compositionally biased toward basic and acidic residues; it reads AKKEEPKKEEPKKEEP. 3 consecutive repeat copies span residues 81-85, 86-90, and 91-95. The tract at residues 81-95 is 3 X 5 AA tandem repeats of K-K-E-E-P; that stretch reads KKEEPKKEEPKKEEP. Residues 96–109 are compositionally biased toward acidic residues; that stretch reads KEEETDMDMGDLFG.

This sequence belongs to the eukaryotic ribosomal protein P1/P2 family. Not phosphorylated.

The protein is Large ribosomal subunit protein P1 (RPLP1) of Tetrahymena thermophila.